We begin with the raw amino-acid sequence, 245 residues long: GTP cyclohydrolase 1 type 2 homolog (245 aa).

A divalent metal cation is bound by residues His-63, His-64, Asp-100, His-213, and Glu-217.

The protein belongs to the GTP cyclohydrolase I type 2/NIF3 family. As to quaternary structure, homohexamer.

In Archaeoglobus fulgidus (strain ATCC 49558 / DSM 4304 / JCM 9628 / NBRC 100126 / VC-16), this protein is GTP cyclohydrolase 1 type 2 homolog.